The sequence spans 122 residues: Nodulation protein NolR (122 aa).

Residues 15–109 enclose the HTH arsR-type domain; the sequence is EKHEDAEIAA…ALSDIYGDDT (95 aa). Positions 49–68 form a DNA-binding region, H-T-H motif; it reads VGALAHKVGLSQSALSQHLS.

As to quaternary structure, binds to the operator site in homodimeric form.

Its function is as follows. Negative transacting factor controlling the nod regulon. May control the expression of nodD1, nodD2, nodD3 and nodABC genes. In Rhizobium meliloti (Ensifer meliloti), this protein is Nodulation protein NolR (nolR).